Consider the following 165-residue polypeptide: Peptidyl-prolyl cis-trans isomerase A (165 aa).

Methionine 1 carries the post-translational modification N-acetylmethionine. Valine 2 carries the post-translational modification N-acetylvaline; in Peptidyl-prolyl cis-trans isomerase A, N-terminally processed. A PPIase cyclophilin-type domain is found at phenylalanine 7–glutamine 163. Residue lysine 28 is modified to N6-acetyllysine; alternate. A Glycyl lysine isopeptide (Lys-Gly) (interchain with G-Cter in SUMO2); alternate cross-link involves residue lysine 28. A Glycyl lysine isopeptide (Lys-Gly) (interchain with G-Cter in ubiquitin); alternate cross-link involves residue lysine 28. Residues lysine 44 and lysine 76 each carry the N6-acetyllysine modification. Serine 77 carries the phosphoserine modification. Position 82 is an N6-acetyllysine; alternate (lysine 82). Residue lysine 82 forms a Glycyl lysine isopeptide (Lys-Gly) (interchain with G-Cter in SUMO2); alternate linkage. Residue threonine 93 is modified to Phosphothreonine. Asparagine 108 carries an N-linked (GlcNAc...) asparagine glycan. An N6-acetyllysine mark is found at lysine 125, lysine 131, and lysine 133.

Belongs to the cyclophilin-type PPIase family. PPIase A subfamily. Interacts with protein phosphatase PPP3CA/calcineurin A. Interacts with isoform 2 of BSG/CD147. Interacts with FOXO1; the interaction promotes FOXO1 dephosphorylation, nuclear accumulation and transcriptional activity. Interacts with integrin ITGA2B:ITGB3; the interaction is ROS and peptidyl-prolyl cis-trans isomerase (PPIase) activity-dependent and is increased in the presence of thrombin. Interacts with MAP3K5. Interacts with TARDBP; the interaction is dependent on the RNA-binding activity of TARDBP and the PPIase activity of PPIA/CYPA and the acetylation of PPIA/CYPA at Lys-125 favors the interaction. Interacts with HNRNPA1, HNRNPA2B1, HNRNPC, RBMX, HNRNPK and HNRNPM. Post-translationally, acetylation at Lys-125 markedly inhibits catalysis of cis to trans isomerization. PPIA acetylation also antagonizes the immunosuppressive effects of cyclosporine by inhibiting the sequential steps of cyclosporine binding and calcineurin inhibition. Acetylation at Lys-125 favors the interaction with TARDBP.

The protein resides in the cytoplasm. It localises to the secreted. Its subcellular location is the nucleus. It carries out the reaction [protein]-peptidylproline (omega=180) = [protein]-peptidylproline (omega=0). With respect to regulation, binds cyclosporin A (CsA). CsA mediates some of its effects via an inhibitory action on PPIase. Its function is as follows. Catalyzes the cis-trans isomerization of proline imidic peptide bonds in oligopeptides. Exerts a strong chemotactic effect on leukocytes partly through activation of one of its membrane receptors BSG/CD147, initiating a signaling cascade that culminates in MAPK/ERK activation. Activates endothelial cells (ECs) in a proinflammatory manner by stimulating activation of NF-kappa-B and ERK, JNK and p38 MAP-kinases and by inducing expression of adhesion molecules including SELE and VCAM1. Induces apoptosis in ECs by promoting the FOXO1-dependent expression of CCL2 and BCL2L11 which are involved in EC chemotaxis and apoptosis. In response to oxidative stress, initiates proapoptotic and antiapoptotic signaling in ECs via activation of NF-kappa-B and AKT1 and up-regulation of antiapoptotic protein BCL2. Negatively regulates MAP3K5/ASK1 kinase activity, autophosphorylation and oxidative stress-induced apoptosis mediated by MAP3K5/ASK1. Necessary for the assembly of TARDBP in heterogeneous nuclear ribonucleoprotein (hnRNP) complexes and regulates TARDBP binding to RNA UG repeats and TARDBP-dependent expression of HDAC6, ATG7 and VCP which are involved in clearance of protein aggregates. Plays an important role in platelet activation and aggregation. Regulates calcium mobilization and integrin ITGA2B:ITGB3 bidirectional signaling via increased ROS production as well as by facilitating the interaction between integrin and the cell cytoskeleton. Binds heparan sulfate glycosaminoglycans. The chain is Peptidyl-prolyl cis-trans isomerase A (PPIA) from Symphalangus syndactylus (Siamang).